The following is a 158-amino-acid chain: Ribonuclease H (158 aa).

One can recognise an RNase H type-1 domain in the interval 3 to 144; sequence GLKQLLIFTD…CDTLAREAAE (142 aa). 4 residues coordinate Mg(2+): aspartate 12, glutamate 50, aspartate 72, and aspartate 136.

The protein belongs to the RNase H family. In terms of assembly, monomer. Mg(2+) serves as cofactor.

It localises to the cytoplasm. It catalyses the reaction Endonucleolytic cleavage to 5'-phosphomonoester.. In terms of biological role, endonuclease that specifically degrades the RNA of RNA-DNA hybrids. The protein is Ribonuclease H of Shewanella loihica (strain ATCC BAA-1088 / PV-4).